Reading from the N-terminus, the 143-residue chain is Large ribosomal subunit protein uL11 (143 aa).

This sequence belongs to the universal ribosomal protein uL11 family. In terms of assembly, part of the ribosomal stalk of the 50S ribosomal subunit. Interacts with L10 and the large rRNA to form the base of the stalk. L10 forms an elongated spine to which L12 dimers bind in a sequential fashion forming a multimeric L10(L12)X complex. One or more lysine residues are methylated.

Forms part of the ribosomal stalk which helps the ribosome interact with GTP-bound translation factors. This chain is Large ribosomal subunit protein uL11, found in Paracidovorax citrulli (strain AAC00-1) (Acidovorax citrulli).